The primary structure comprises 100 residues: Urease subunit gamma (100 aa).

This sequence belongs to the urease gamma subunit family. As to quaternary structure, probable heterotrimer of UreA (gamma), UreB (beta) and UreC (alpha) subunits. Three heterotrimers associate to form the active enzyme. The trimeric urease interacts with an accessory complex composed of UreD, UreF and UreG, which is required for the assembly of the nickel containing metallocenter of UreC. The UreE protein may also play a direct role in nickel transfer to the urease apoprotein.

Its subcellular location is the cytoplasm. It carries out the reaction urea + 2 H2O + H(+) = hydrogencarbonate + 2 NH4(+). It participates in nitrogen metabolism; urea degradation; CO(2) and NH(3) from urea (urease route): step 1/1. This chain is Urease subunit gamma, found in Proteus mirabilis (strain HI4320).